The primary structure comprises 374 residues: Pectate lyase 2 (374 aa).

Positions 1-22 are cleaved as a signal peptide; the sequence is MKYLLPTAAAGLLLLAAQPAMA. Cys93 and Cys176 form a disulfide bridge. Ca(2+)-binding residues include Asp150, Asp152, Glu187, and Asp191. The active site involves Arg239. The cysteines at positions 350 and 373 are disulfide-linked.

It belongs to the polysaccharide lyase 1 family. PLADES subfamily. Requires Ca(2+) as cofactor.

It localises to the secreted. The catalysed reaction is Eliminative cleavage of (1-&gt;4)-alpha-D-galacturonan to give oligosaccharides with 4-deoxy-alpha-D-galact-4-enuronosyl groups at their non-reducing ends.. It functions in the pathway glycan metabolism; pectin degradation; 2-dehydro-3-deoxy-D-gluconate from pectin: step 2/5. Functionally, involved in maceration and soft-rotting of plant tissue. The polypeptide is Pectate lyase 2 (pel2) (Pectobacterium carotovorum (Erwinia carotovora)).